A 995-amino-acid chain; its full sequence is MSSLPRRAKVQVQDVVLKDEFSSFSELSSASEEDDKEDSAWEPQKKVPRSRKQPPPKESKPKRMPRVKKNAPQISDGSEVVVVKEELNSSVAIADTALEDRKNKLDTVQTLKTAKTKQKCAAQPHTVRRTKKLKVEEETSKASNLEGESNSSETPSTSTVWGGTCKKEENDDDFTFGQSALKKIKTETYPQGQPVKFPANANSTKEEVEMNWDMVQVLSERTNIEPWVCANIIRLFNDDNTIPFIIRYRKELINNLDADSLREVQQTLEELRAVAKKVHSTIQKIKKEGKMSECLLKAMLNCKTFEELEHVSAPYKTGSKGTKAQRARQLGLEGAARALLEKPGELSLLSYIRPDVKGLSTLQDIEIGVQHILADMIAKDKDTLDFIRNLCQKRHVCIQSSLAKVSSKKVNEKDVDKFLLYQHFSCNIRNIHHHQILAINRGENLKVLTVKVNISDGVKDEFCRWCIQNRWRPRSFARPELMKILYNSLNDSFKRLIYPLLCREFRAKLTSDAEKESVMMFGRNLRQLLLTSPVPGRTLMGVDPGYKHGCKLAIISPTSQILHTDVVYLHCGQGFREAEKIKTLLLNFNCSTVVIGNGTACRETEAYFADLIMKNYFAPLDVVYCIVSEAGASIYSVSPEANKEMPGLDPNLRSAVSIARRVQDPLAELVKIEPKHIGVGMYQHDVSQTLLKATLDSVVEECVSFVGVDINICSEVLLRHIAGLNANRAKNIIEWREKNGPFINREQLKKVKGLGPKSFQQCAGFIRINQDYIRTFCSQQTETSGQIQGVAVTSSADVEVTNEKQGKKKSKTAVNVLLKPNPLDQTCIHPESYDIAMRFLSSIGGTLYEVGKPEMQQKINSFLEKEGMEKIAERLQTTVHTLQVIIDGLSQPESFDFRTDFDKPDFKRSIVCLEDLQIGTVLTGKVENATLFGIFVDIGVGKSGLIPIRNVTEAKLSKTKKRRSLGLGPGERVEVQVLNIDIPRSRITLDLIRVL.

The disordered stretch occupies residues 23-81 (SFSELSSASEEDDKEDSAWEPQKKVPRSRKQPPPKESKPKRMPRVKKNAPQISDGSEVV). Residues Lys-84 and Lys-134 each participate in a glycyl lysine isopeptide (Lys-Gly) (interchain with G-Cter in SUMO2) cross-link. Residues 120–165 (CAAQPHTVRRTKKLKVEEETSKASNLEGESNSSETPSTSTVWGGTC) form a disordered region. Residues 146 to 159 (EGESNSSETPSTST) are compositionally biased toward low complexity. Glycyl lysine isopeptide (Lys-Gly) (interchain with G-Cter in SUMO2) cross-links involve residues Lys-166, Lys-167, and Lys-183. Lys-185 participates in a covalent cross-link: Glycyl lysine isopeptide (Lys-Gly) (interchain with G-Cter in SUMO1); alternate. A Glycyl lysine isopeptide (Lys-Gly) (interchain with G-Cter in SUMO2); alternate cross-link involves residue Lys-185. The stretch at 258–288 (ADSLREVQQTLEELRAVAKKVHSTIQKIKKE) forms a coiled coil. At Ser-861 the chain carries Phosphoserine. In terms of domain architecture, S1 motif spans 919–992 (GTVLTGKVEN…PRSRITLDLI (74 aa)). Residue Lys-955 forms a Glycyl lysine isopeptide (Lys-Gly) (interchain with G-Cter in SUMO2) linkage. Ser-964 bears the Phosphoserine mark.

The sequence is that of S1 RNA-binding domain-containing protein 1 (SRBD1) from Homo sapiens (Human).